We begin with the raw amino-acid sequence, 937 residues long: Vacuolar membrane protease (937 aa).

At 1-16 (PNGFVKFIRSIFGYRK) the chain is on the cytoplasmic side. Residues 17-37 (TSLTLFVILTYVAVLLLAYLD) traverse the membrane as a helical segment. Residues 38-373 (HSLYYSVDLP…FPTSQVVVAS (336 aa)) lie on the Vacuolar side of the membrane. N-linked (GlcNAc...) asparagine glycosylation is found at asparagine 106 and asparagine 140. 2 residues coordinate Zn(2+): histidine 154 and aspartate 166. Residue glutamate 201 is the Proton acceptor of the active site. Residues glutamate 202, glutamate 227, and histidine 300 each contribute to the Zn(2+) site. The chain crosses the membrane as a helical span at residues 374–394 (ILLLVLIPGISIPFLIIIFGY). Residues 395–407 (KKNWELSFVNVTK) are Cytoplasmic-facing. Residues 408-428 (FPISLAISAALLNLFTNGFIV) form a helical membrane-spanning segment. Residues 429 to 437 (PFNQFLPNS) lie on the Vacuolar side of the membrane. Residues 438 to 458 (SPFALVAILFATFLLLNYLIL) traverse the membrane as a helical segment. At 459 to 475 (NGINLIFVSYKIVNHDE) the chain is on the cytoplasmic side. The chain crosses the membrane as a helical span at residues 476 to 496 (KLISIIETSFLYWVVLIYSTA). The Vacuolar segment spans residues 497-510 (KLANNVIGDDHSGE). The chain crosses the membrane as a helical span at residues 511 to 531 (FPIIFLCALQAVASIFGLIGW). Over 532–580 (SFKPVPKEHYVVVPQEEAEPLLGSSDNFNYGSPDVEDDRLVSDGSYDWS) the chain is Cytoplasmic. Residues 581–601 (IQFLTIVPISTYLIYNSGFLV) form a helical membrane-spanning segment. Residues 602 to 618 (VDGINKSIQESLISQNL) are Vacuolar-facing. An N-linked (GlcNAc...) asparagine glycan is attached at asparagine 606. The helical transmembrane segment at 619–639 (IYKLLQTFAISLSIPLLPFIF) threads the bilayer. Over 640–643 (KVNR) the chain is Cytoplasmic. A helical membrane pass occupies residues 644-664 (LFVLALFLISTIGVLFVATAD). Residues 665–937 (SFNVANPLKL…LVSVSKTVEL (273 aa)) are Vacuolar-facing. 3 N-linked (GlcNAc...) asparagine glycosylation sites follow: asparagine 758, asparagine 870, and asparagine 887.

Belongs to the peptidase M28 family. Requires Zn(2+) as cofactor.

Its subcellular location is the vacuole membrane. May be involved in vacuolar sorting and osmoregulation. The protein is Vacuolar membrane protease of Scheffersomyces stipitis (strain ATCC 58785 / CBS 6054 / NBRC 10063 / NRRL Y-11545) (Yeast).